The chain runs to 204 residues: Urease accessory protein UreG (204 aa).

10 to 17 provides a ligand contact to GTP; that stretch reads GPVGAGKT.

This sequence belongs to the SIMIBI class G3E GTPase family. UreG subfamily. Homodimer. UreD, UreF and UreG form a complex that acts as a GTP-hydrolysis-dependent molecular chaperone, activating the urease apoprotein by helping to assemble the nickel containing metallocenter of UreC. The UreE protein probably delivers the nickel.

It localises to the cytoplasm. Functionally, facilitates the functional incorporation of the urease nickel metallocenter. This process requires GTP hydrolysis, probably effectuated by UreG. This chain is Urease accessory protein UreG, found in Bacillus sp. (strain TB-90).